A 352-amino-acid chain; its full sequence is Serine/threonine-protein phosphatase 2A activator 2 (352 aa).

This sequence belongs to the PTPA-type PPIase family.

It localises to the cytoplasm. It catalyses the reaction [protein]-peptidylproline (omega=180) = [protein]-peptidylproline (omega=0). PPIases accelerate the folding of proteins. It catalyzes the cis-trans isomerization of proline imidic peptide bonds in oligopeptides. Acts as a regulatory subunit for PP2A-like phosphatases modulating their activity or substrate specificity, probably by inducing a conformational change in the catalytic subunit, a direct target of the PPIase. Can reactivate inactive phosphatase PP2A-phosphatase methylesterase complexes (PP2Ai) in presence of ATP and Mg(2+) by dissociating the inactive form from the complex. The chain is Serine/threonine-protein phosphatase 2A activator 2 (rrd2) from Schizosaccharomyces pombe (strain 972 / ATCC 24843) (Fission yeast).